Reading from the N-terminus, the 88-residue chain is Putative septation protein SpoVG (88 aa).

The protein belongs to the SpoVG family.

In terms of biological role, could be involved in septation. This is Putative septation protein SpoVG from Desulforudis audaxviator (strain MP104C).